The chain runs to 1264 residues: Kinesin-like protein KIN-14B (1264 aa).

A compositionally biased stretch (polar residues) spans 1-10; it reads MAEQKSTNMW. Residues 1-52 form a disordered region; that stretch reads MAEQKSTNMWNWEVTGFESKKSPSSEEGVHRTPSSMLRRYSIPKNSLPPHSS. Residues 18-30 show a composition bias toward basic and acidic residues; the sequence is ESKKSPSSEEGVH. Positions 53–84 form a coiled coil; that stretch reads ELASKVQSLKDKVQLAKDDYVGLRQEATDLQE. Residues 138 to 452 enclose the Kinesin motor domain; the sequence is NVKVFCRARP…LNYAARARNT (315 aa). An ATP-binding site is contributed by 219 to 226; that stretch reads GQTHAGKT. 3 coiled-coil regions span residues 462 to 511, 545 to 592, and 617 to 640; these read IKKW…YNEV, QLRN…LKSD, and TKKLEEELKKRDALIERLHEENEK. Residues 588 to 615 form a disordered region; sequence ALKSDMTRSRDPLEPQPRAAENTLDSSA. Basic and acidic residues predominate over residues 589 to 600; sequence LKSDMTRSRDPL. Over residues 652-668 the composition is skewed to low complexity; that stretch reads SSTQVSSPSSKASPTVQ. Disordered stretches follow at residues 652–684 and 1117–1136; these read SSTQVSSPSSKASPTVQPADVDSAGTLPSSVDK and PEQEDNLQDEKRPSIDSISS.

This sequence belongs to the TRAFAC class myosin-kinesin ATPase superfamily. Kinesin family. KIN-14 subfamily. In terms of assembly, homodimer and heterodimer with KCA1. Interacts with CDKA-1. Interacts with At4g14310. As to expression, expressed in roots, leaves, stems and flowers.

It localises to the cell membrane. Functionally, kinesin-like protein required for chloroplast movements and anchor to the plasma membrane. Mediates chloroplast movement via chloroplast actin (cp-actin) filaments. Required for the chloroplast avoidance response under high intensity blue light. Mediates redundantly with CHUP1 the nuclear avoidance response under high intensity blue light. May be involved in division plane determination. This Arabidopsis thaliana (Mouse-ear cress) protein is Kinesin-like protein KIN-14B.